The following is a 263-amino-acid chain: Small ribosomal subunit protein eS4 (263 aa).

Residues 42-104 (LPLIIFLRNR…TGEHFRLVYD (63 aa)) enclose the S4 RNA-binding domain.

This sequence belongs to the eukaryotic ribosomal protein eS4 family. In terms of assembly, component of the small ribosomal subunit.

It localises to the cytoplasm. Functionally, component of the small ribosomal subunit. The ribosome is a large ribonucleoprotein complex responsible for the synthesis of proteins in the cell. The chain is Small ribosomal subunit protein eS4 (rps4) from Xenopus tropicalis (Western clawed frog).